The following is a 76-amino-acid chain: DNA-directed RNA polymerase subunit epsilon (76 aa).

The protein belongs to the RNA polymerase subunit epsilon family. As to quaternary structure, RNAP is composed of a core of 2 alpha, a beta and a beta' subunit. The core is associated with a delta subunit, and at least one of epsilon or omega. When a sigma factor is associated with the core the holoenzyme is formed, which can initiate transcription.

It catalyses the reaction RNA(n) + a ribonucleoside 5'-triphosphate = RNA(n+1) + diphosphate. Its function is as follows. A non-essential component of RNA polymerase (RNAP). The chain is DNA-directed RNA polymerase subunit epsilon from Streptococcus agalactiae serotype Ia (strain ATCC 27591 / A909 / CDC SS700).